The sequence spans 84 residues: Small ribosomal subunit protein bS16c (84 aa).

This sequence belongs to the bacterial ribosomal protein bS16 family.

Its subcellular location is the plastid. It localises to the chloroplast. The sequence is that of Small ribosomal subunit protein bS16c from Mesostigma viride (Green alga).